The chain runs to 505 residues: uncharacterized protein (505 aa).

The interval 461 to 480 is disordered; it reads RTDVHPGNSDDEGAYSSADS.

The protein to M.jannaschii MJ0787.

This is an uncharacterized protein from Methanothermobacter thermautotrophicus (strain ATCC 29096 / DSM 1053 / JCM 10044 / NBRC 100330 / Delta H) (Methanobacterium thermoautotrophicum).